Consider the following 193-residue polypeptide: Holliday junction branch migration complex subunit RuvA (193 aa).

Positions 1-63 are domain I; sequence MYAYLKGKIM…EDAQLLYGFK (63 aa). Positions 64-141 are domain II; it reads DEEEKAMFNA…TITDESELFK (78 aa). The segment at 141-142 is flexible linker; it reads KE. Residues 143-193 are domain III; it reads VNDTLLNEALLAFEALGYSKREITKIEKELKKKQFSTVDEYVKQGLQMFVS.

It belongs to the RuvA family. Homotetramer. Forms an RuvA(8)-RuvB(12)-Holliday junction (HJ) complex. HJ DNA is sandwiched between 2 RuvA tetramers; dsDNA enters through RuvA and exits via RuvB. An RuvB hexamer assembles on each DNA strand where it exits the tetramer. Each RuvB hexamer is contacted by two RuvA subunits (via domain III) on 2 adjacent RuvB subunits; this complex drives branch migration. In the full resolvosome a probable DNA-RuvA(4)-RuvB(12)-RuvC(2) complex forms which resolves the HJ.

It is found in the cytoplasm. Its function is as follows. The RuvA-RuvB-RuvC complex processes Holliday junction (HJ) DNA during genetic recombination and DNA repair, while the RuvA-RuvB complex plays an important role in the rescue of blocked DNA replication forks via replication fork reversal (RFR). RuvA specifically binds to HJ cruciform DNA, conferring on it an open structure. The RuvB hexamer acts as an ATP-dependent pump, pulling dsDNA into and through the RuvAB complex. HJ branch migration allows RuvC to scan DNA until it finds its consensus sequence, where it cleaves and resolves the cruciform DNA. The sequence is that of Holliday junction branch migration complex subunit RuvA from Macrococcus caseolyticus (strain JCSC5402) (Macrococcoides caseolyticum).